Here is a 374-residue protein sequence, read N- to C-terminus: Homoserine O-succinyltransferase (374 aa).

The AB hydrolase-1 domain occupies 47–357 (NAILVCHALS…NFGHDSFLME (311 aa)). The active-site Nucleophile is Ser153. Residue Arg223 participates in substrate binding. Residues Asp318 and His351 contribute to the active site. Asp352 provides a ligand contact to substrate.

Belongs to the AB hydrolase superfamily. MetX family. Homodimer.

It is found in the cytoplasm. It carries out the reaction L-homoserine + succinyl-CoA = O-succinyl-L-homoserine + CoA. It participates in amino-acid biosynthesis; L-methionine biosynthesis via de novo pathway; O-succinyl-L-homoserine from L-homoserine: step 1/1. Functionally, transfers a succinyl group from succinyl-CoA to L-homoserine, forming succinyl-L-homoserine. This Dechloromonas aromatica (strain RCB) protein is Homoserine O-succinyltransferase.